The chain runs to 234 residues: Proteasome subunit alpha type-6 (234 aa).

At S14 the chain carries Phosphoserine. K191 participates in a covalent cross-link: Glycyl lysine isopeptide (Lys-Gly) (interchain with G-Cter in ubiquitin).

This sequence belongs to the peptidase T1A family. In terms of assembly, the 26S proteasome consists of a 20S proteasome core and two 19S regulatory subunits. The 20S proteasome core is composed of 28 subunits that are arranged in four stacked rings, resulting in a barrel-shaped structure. The two end rings are each formed by seven alpha subunits, and the two central rings are each formed by seven beta subunits. The catalytic chamber with the active sites is on the inside of the barrel.

Its subcellular location is the cytoplasm. The protein resides in the nucleus. The proteasome degrades poly-ubiquitinated proteins in the cytoplasm and in the nucleus. It is essential for the regulated turnover of proteins and for the removal of misfolded proteins. The proteasome is a multicatalytic proteinase complex that is characterized by its ability to cleave peptides with Arg, Phe, Tyr, Leu, and Glu adjacent to the leaving group at neutral or slightly basic pH. It has an ATP-dependent proteolytic activity. In Saccharomyces cerevisiae (strain ATCC 204508 / S288c) (Baker's yeast), this protein is Proteasome subunit alpha type-6 (PRE5).